A 415-amino-acid polypeptide reads, in one-letter code: Mitogen-activated protein kinase MPS1 (415 aa).

Positions 23–314 (YTVTKELGQG…VEQALEHPYL (292 aa)) constitute a Protein kinase domain. ATP contacts are provided by residues 29 to 37 (LGQGAYGIV) and Lys-52. The tract at residues 363–394 (GAGGHGAPHAPQVPIPAGAGQGQWKAEDPRPQ) is disordered.

This sequence belongs to the protein kinase superfamily. Ser/Thr protein kinase family. MAP kinase subfamily. In terms of assembly, interacts with transcription factor MIG1. Interacts with transcription factor SWI6. Mg(2+) serves as cofactor.

It carries out the reaction L-seryl-[protein] + ATP = O-phospho-L-seryl-[protein] + ADP + H(+). The enzyme catalyses L-threonyl-[protein] + ATP = O-phospho-L-threonyl-[protein] + ADP + H(+). Mitogen-activated protein kinase; part of the MCK1-MKK2-MPS1 MAP kinase (MAPK) signal transduction cascade that is essential for cell wall integrity and plant infection, but not for plant defense responses. Beside its role in pathogenesis, the MPS1 cascade is active in conidiation and cellular stress responses. Targets downstream of the MPS1-MAPK pathway include transcription factors MIG1 and SWI6, as well as GSK1 and MPG1. The polypeptide is Mitogen-activated protein kinase MPS1 (Pyricularia oryzae (strain 70-15 / ATCC MYA-4617 / FGSC 8958) (Rice blast fungus)).